The primary structure comprises 253 residues: UPF0280 protein Mbar_A3697 (253 aa).

It belongs to the UPF0280 family.

This is UPF0280 protein Mbar_A3697 from Methanosarcina barkeri (strain Fusaro / DSM 804).